A 267-amino-acid polypeptide reads, in one-letter code: Putative transcription factor Ovo-like 1 (267 aa).

C2H2-type zinc fingers lie at residues 118–140, 146–168, 174–197, and 213–236; these read FTCH…MKCH, HLCT…VRTH, YKCS…KKIH, and YVCE…KERH.

As to expression, expressed in skin, testis, kidney and weakly in lung. Not detected in heart, brain, spleen, liver and skeletal muscle.

Its subcellular location is the nucleus. Its function is as follows. Putative transcription factor. Involved in hair formation and spermatogenesis. May function in the differentiation and/or maintenance of the urogenital system. This Mus musculus (Mouse) protein is Putative transcription factor Ovo-like 1 (Ovol1).